Reading from the N-terminus, the 88-residue chain is Small ribosomal subunit protein bS20 (88 aa).

This sequence belongs to the bacterial ribosomal protein bS20 family.

Its function is as follows. Binds directly to 16S ribosomal RNA. The polypeptide is Small ribosomal subunit protein bS20 (Rhodopseudomonas palustris (strain BisA53)).